Reading from the N-terminus, the 174-residue chain is Photosystem II repair protein PSB27-H1, chloroplastic (174 aa).

The disordered stretch occupies residues 1–35 (MASASATATLLKPNLPPHKPTIIASSVSPPLPPPR). Phosphothreonine is present on Thr94. At Tyr132 the chain carries Phosphotyrosine.

It belongs to the Psb27 family.

It localises to the plastid. Its subcellular location is the chloroplast thylakoid membrane. Probably involved in repair of photodamaged photosystem II (PSII). This is Photosystem II repair protein PSB27-H1, chloroplastic (PSB27-1) from Arabidopsis thaliana (Mouse-ear cress).